The chain runs to 203 residues: LexA repressor (203 aa).

A DNA-binding region (H-T-H motif) is located at residues 28-48; that stretch reads RAEIASQLGFRSPNAAEEHLK. Active-site for autocatalytic cleavage activity residues include Ser120 and Lys157.

This sequence belongs to the peptidase S24 family. As to quaternary structure, homodimer.

It carries out the reaction Hydrolysis of Ala-|-Gly bond in repressor LexA.. Functionally, represses a number of genes involved in the response to DNA damage (SOS response), including recA and lexA. Binds to the 16 bp palindromic sequence 5'-CTGTATATATATACAG-3'. In the presence of single-stranded DNA, RecA interacts with LexA causing an autocatalytic cleavage which disrupts the DNA-binding part of LexA, leading to derepression of the SOS regulon and eventually DNA repair. The protein is LexA repressor of Proteus mirabilis (strain HI4320).